A 626-amino-acid polypeptide reads, in one-letter code: Polygalacturonase 1 beta-like protein 3 (626 aa).

The signal sequence occupies residues 1–23 (MLKQFLLLQSFSFFLFNVVIVGG). The stretch at 117-120 (FSVY) is one FXXY 1 repeat. Asn124 carries an N-linked (GlcNAc...) asparagine glycan. FXXY repeat units follow at residues 125 to 128 (FTNY), 139 to 142 (FKNY), 153 to 156 (FRRY), 167 to 170 (FTVY), 181 to 184 (FNSY), 195 to 198 (FTNY), 209 to 212 (FTAY), 223 to 226 (FKTY), 238 to 241 (FTSY), 252 to 255 (FTSY), and 266 to 269 (FSNY). Residue Asn141 is glycosylated (N-linked (GlcNAc...) asparagine). An N-linked (GlcNAc...) asparagine glycan is attached at Asn277. FXXY repeat units follow at residues 280–283 (FTSY), 294–297 (FNNY), 308–311 (FANY), 322–325 (FSSY), 336–339 (FVNY), 350–353 (FTGY), and 364–367 (FKTY). The N-linked (GlcNAc...) asparagine glycan is linked to Asn370. FXXY repeat units follow at residues 373 to 376 (FKDY) and 383 to 386 (FAKY). N-linked (GlcNAc...) asparagine glycosylation is found at Asn387 and Asn465. The 215-residue stretch at 411-625 (FFRESSLKEG…FENDMNWAIA (215 aa)) folds into the BURP domain.

Expressed in flowers and stems. Detected in trichomes, guard cells, root vascular tissue, root hairs, pollen sacs, sepals and styles of pistils.

The protein resides in the secreted. It localises to the extracellular space. It is found in the apoplast. The protein localises to the cell wall. Functionally, involved in cell size determination. May serve as a chaperone for expansins through the secretory pathway. This Arabidopsis thaliana (Mouse-ear cress) protein is Polygalacturonase 1 beta-like protein 3.